A 423-amino-acid chain; its full sequence is Pleckstrin homology domain-containing family O member 1 (423 aa).

Disordered stretches follow at residues 1-21 (MEKN…SAQP), 81-100 (RKSK…AHSR), and 217-277 (LAAG…HSEK). Over residues 7 to 20 (AKRGQQDGNQQSAQ) the composition is skewed to polar residues. One can recognise a PH domain in the interval 20-131 (QPEKVGWVRK…WINALNSAIT (112 aa)). The segment covering 83 to 92 (SKSRSKKNHS) has biased composition (basic residues). Basic and acidic residues predominate over residues 222–259 (RRSDSENVKLSEKGRSGTLPRHEVTSWDKPTQRKDSLD).

In terms of processing, C-terminal fragments could be released during apoptosis via caspase-3-dependent cleavage.

It localises to the membrane. The protein resides in the nucleus. Its subcellular location is the cytoplasm. Plays a role in the regulation of the actin cytoskeleton through its interactions with actin capping protein (CP). The chain is Pleckstrin homology domain-containing family O member 1 (PLEKHO1) from Gallus gallus (Chicken).